The chain runs to 243 residues: Protein-L-isoaspartate O-methyltransferase 2 (243 aa).

Positions 21–42 (DACADRGHPSAERSTPETERRR) are disordered. Residues 23 to 42 (CADRGHPSAERSTPETERRR) show a composition bias toward basic and acidic residues. Serine 94 is a catalytic residue.

The protein belongs to the methyltransferase superfamily. L-isoaspartyl/D-aspartyl protein methyltransferase family.

The protein resides in the cytoplasm. The enzyme catalyses [protein]-L-isoaspartate + S-adenosyl-L-methionine = [protein]-L-isoaspartate alpha-methyl ester + S-adenosyl-L-homocysteine. Catalyzes the methyl esterification of L-isoaspartyl residues in peptides and proteins that result from spontaneous decomposition of normal L-aspartyl and L-asparaginyl residues. It plays a role in the repair and/or degradation of damaged proteins. The polypeptide is Protein-L-isoaspartate O-methyltransferase 2 (Anaeromyxobacter sp. (strain Fw109-5)).